The primary structure comprises 184 residues: Oocyte-secreted protein 4A (184 aa).

Positions 1–19 (MKISCVLGKLLMLFELIHG) are cleaved as a signal peptide. N-linked (GlcNAc...) asparagine glycosylation is present at Asn128.

It belongs to the PLAC1 family.

Its subcellular location is the secreted. This chain is Oocyte-secreted protein 4A, found in Homo sapiens (Human).